We begin with the raw amino-acid sequence, 435 residues long: Enolase (435 aa).

Residue Q163 coordinates (2R)-2-phosphoglycerate. E205 serves as the catalytic Proton donor. D243, E292, and D319 together coordinate Mg(2+). Residues K344, R373, S374, and K395 each coordinate (2R)-2-phosphoglycerate. Residue K344 is the Proton acceptor of the active site.

It belongs to the enolase family. The cofactor is Mg(2+).

It is found in the cytoplasm. It localises to the secreted. The protein localises to the cell surface. The enzyme catalyses (2R)-2-phosphoglycerate = phosphoenolpyruvate + H2O. It participates in carbohydrate degradation; glycolysis; pyruvate from D-glyceraldehyde 3-phosphate: step 4/5. Its function is as follows. Catalyzes the reversible conversion of 2-phosphoglycerate (2-PG) into phosphoenolpyruvate (PEP). It is essential for the degradation of carbohydrates via glycolysis. The sequence is that of Enolase from Streptococcus pyogenes serotype M12 (strain MGAS2096).